The following is a 376-amino-acid chain: UPF0754 membrane protein SE_1527 (376 aa).

Transmembrane regions (helical) follow at residues 4-24 and 356-376; these read ILLVVFMIILGAIIGGVTNMI and TLGFILGGIIGFFQGVIAIFV.

It belongs to the UPF0754 family.

The protein localises to the cell membrane. This chain is UPF0754 membrane protein SE_1527, found in Staphylococcus epidermidis (strain ATCC 12228 / FDA PCI 1200).